The primary structure comprises 152 residues: ATP synthase epsilon chain 2 (152 aa).

It belongs to the ATPase epsilon chain family. In terms of assembly, F-type ATPases have 2 components, CF(1) - the catalytic core - and CF(0) - the membrane proton channel. CF(1) has five subunits: alpha(3), beta(3), gamma(1), delta(1), epsilon(1). CF(0) has three main subunits: a, b and c.

Its subcellular location is the cell inner membrane. Produces ATP from ADP in the presence of a proton gradient across the membrane. The protein is ATP synthase epsilon chain 2 of Burkholderia orbicola (strain AU 1054).